Consider the following 74-residue polypeptide: Defensin Lc-def (74 aa).

An N-terminal signal peptide occupies residues 1 to 27 (MEKKTVAALSFLFIVLFVAQEIAVTEA). 4 disulfides stabilise this stretch: C30-C74, C41-C62, C47-C68, and C51-C70.

The protein localises to the secreted. Has antifungal activity against the phytopathogenic fungus A.niger VKM F-2259, but not against A.alternata VKM F-3047. Does not inhibit trypsin or chymotrypsin. The protein is Defensin Lc-def of Lens culinaris subsp. culinaris (Cultivated lentil).